The primary structure comprises 410 residues: MVLSQRQRDELNRAIADYLRSNGYEEAYSTFKKEAELDMNEELDKKYAGLLEKKWTSVIRLQKKVMELESKLNEAKEEITLGGPVAQKRDPKEWIPRPPERYALSGHRSPVTRVIFHPVFSVMVTSSEDATIKVWDYEAGDFERTLKGHTDSVQDISFDQTGKLLASCSADMTIKLWDFQGFECIRTMHGHDHNVSSVAIMPNGDHIVSASRDKTIKMWEVATGYCVKTFTGHREWVRMVRPNQDGSLIASCSNDQTVRVWVATSKECKAELREHEHVVECIAWAPDTAHPTILEATSSESKKNGKSGPFLLSGSRDKTIKMWDISTGMCLMTLVGHDNWVRGVLVHPGGRFIVSCADDKTLRIWDYKNKRCMKTLCAHEHFVTSLDMHQTAPYVVTGSVDQTVKVWECR.

The 33-residue stretch at 7 to 39 (QRDELNRAIADYLRSNGYEEAYSTFKKEAELDM) folds into the LisH domain. Residues 56-82 (TSVIRLQKKVMELESKLNEAKEEITLG) adopt a coiled-coil conformation. WD repeat units lie at residues 106 to 147 (GHRS…RTLK), 148 to 187 (GHTD…CIRT), 190 to 229 (GHDH…CVKT), 232 to 271 (GHRE…CKAE), 274 to 333 (EHEH…CLMT), 336 to 375 (GHDN…CMKT), and 378 to 410 (AHEH…WECR).

Belongs to the WD repeat LIS1/nudF family. In terms of assembly, can self-associate. Component of the cytosolic PAF-AH (I) heterotetrameric enzyme, which is composed of PAFAH1B1 (beta), PAFAH1B2 (alpha2) and PAFAH1B3 (alpha1) subunits. The catalytic activity of the enzyme resides in the alpha1 (PAFAH1B3) and alpha2 (PAFAH1B2) subunits, whereas the beta subunit (PAFAH1B1) has regulatory activity. Trimer formation is not essential for the catalytic activity. Interacts with dynein, dynactin, nde1 and ndel1.

Its subcellular location is the cytoplasm. It is found in the cytoskeleton. It localises to the microtubule organizing center. The protein localises to the centrosome. Its function is as follows. Regulatory subunit (beta subunit) of the cytosolic type I platelet-activating factor (PAF) acetylhydrolase (PAF-AH (I)), an enzyme that catalyzes the hydrolyze of the acetyl group at the sn-2 position of PAF and its analogs and participates in PAF inactivation. Regulates the PAF-AH (I) activity in a catalytic dimer composition-dependent manner. Positively regulates the activity of the minus-end directed microtubule motor protein dynein. May enhance dynein-mediated microtubule sliding by targeting dynein to the microtubule plus end. Required for several dynein- and microtubule-dependent processes such as the maintenance of Golgi integrity, the peripheral transport of microtubule fragments and the coupling of the nucleus and centrosome. May be required for proliferation of neuronal precursors and neuronal migration. This chain is Lissencephaly-1 homolog B (pafah1b1-2), found in Salmo salar (Atlantic salmon).